An 88-amino-acid polypeptide reads, in one-letter code: uncharacterized protein (88 aa).

Residues 1-22 form the signal peptide; it reads MLKASILFITISLTLMLENSYG. 3 disulfides stabilise this stretch: Cys-59/Cys-73, Cys-66/Cys-77, and Cys-72/Cys-82.

The protein localises to the secreted. This is an uncharacterized protein from Schistosoma japonicum (Blood fluke).